A 268-amino-acid polypeptide reads, in one-letter code: Ribosomal RNA small subunit methyltransferase A (268 aa).

S-adenosyl-L-methionine is bound by residues Asn10, Ile12, Gly37, Glu58, Asp83, and Asn107.

The protein belongs to the class I-like SAM-binding methyltransferase superfamily. rRNA adenine N(6)-methyltransferase family. RsmA subfamily.

It localises to the cytoplasm. It catalyses the reaction adenosine(1518)/adenosine(1519) in 16S rRNA + 4 S-adenosyl-L-methionine = N(6)-dimethyladenosine(1518)/N(6)-dimethyladenosine(1519) in 16S rRNA + 4 S-adenosyl-L-homocysteine + 4 H(+). Its function is as follows. Specifically dimethylates two adjacent adenosines (A1518 and A1519) in the loop of a conserved hairpin near the 3'-end of 16S rRNA in the 30S particle. May play a critical role in biogenesis of 30S subunits. In Caldanaerobacter subterraneus subsp. tengcongensis (strain DSM 15242 / JCM 11007 / NBRC 100824 / MB4) (Thermoanaerobacter tengcongensis), this protein is Ribosomal RNA small subunit methyltransferase A.